The primary structure comprises 802 residues: Outer membrane usher protein CssD (802 aa).

The protein belongs to the fimbrial export usher family.

It localises to the cell outer membrane. Functionally, involved in the export and assembly of C6 fimbrial subunits across the outer membrane. This is Outer membrane usher protein CssD (cssD) from Escherichia coli.